Reading from the N-terminus, the 418-residue chain is Queuine tRNA-ribosyltransferase accessory subunit 2 (418 aa).

Zn(2+) is bound by residues Cys-325, Cys-327, Cys-330, and His-356.

It belongs to the queuine tRNA-ribosyltransferase family. QTRT2 subfamily. As to quaternary structure, heterodimer of a catalytic subunit and an accessory subunit. Zn(2+) serves as cofactor.

Its subcellular location is the cytoplasm. Non-catalytic subunit of the queuine tRNA-ribosyltransferase (TGT) that catalyzes the base-exchange of a guanine (G) residue with queuine (Q) at position 34 (anticodon wobble position) in tRNAs with GU(N) anticodons (tRNA-Asp, -Asn, -His and -Tyr), resulting in the hypermodified nucleoside queuosine (7-(((4,5-cis-dihydroxy-2-cyclopenten-1-yl)amino)methyl)-7-deazaguanosine). This is Queuine tRNA-ribosyltransferase accessory subunit 2 from Drosophila melanogaster (Fruit fly).